Reading from the N-terminus, the 202-residue chain is Imidazoleglycerol-phosphate dehydratase (202 aa).

Belongs to the imidazoleglycerol-phosphate dehydratase family.

Its subcellular location is the cytoplasm. The catalysed reaction is D-erythro-1-(imidazol-4-yl)glycerol 3-phosphate = 3-(imidazol-4-yl)-2-oxopropyl phosphate + H2O. It functions in the pathway amino-acid biosynthesis; L-histidine biosynthesis; L-histidine from 5-phospho-alpha-D-ribose 1-diphosphate: step 6/9. The sequence is that of Imidazoleglycerol-phosphate dehydratase from Brucella suis (strain ATCC 23445 / NCTC 10510).